A 141-amino-acid polypeptide reads, in one-letter code: 16 kDa protein (141 aa).

The interval 100–119 (TVKKSRNSKPSKKKFKERKE) is disordered. A compositionally biased stretch (basic residues) spans 102 to 115 (KKSRNSKPSKKKFK).

The polypeptide is 16 kDa protein (Tobacco rattle virus (strain PLB)).